The following is a 430-amino-acid chain: Enolase (430 aa).

(2R)-2-phosphoglycerate is bound at residue Gln167. The Proton donor role is filled by Glu209. Mg(2+)-binding residues include Asp246, Glu289, and Asp316. Positions 341, 370, 371, and 392 each coordinate (2R)-2-phosphoglycerate. Catalysis depends on Lys341, which acts as the Proton acceptor.

It belongs to the enolase family. Component of the RNA degradosome, a multiprotein complex involved in RNA processing and mRNA degradation. Mg(2+) serves as cofactor.

The protein localises to the cytoplasm. Its subcellular location is the secreted. It is found in the cell surface. It carries out the reaction (2R)-2-phosphoglycerate = phosphoenolpyruvate + H2O. It functions in the pathway carbohydrate degradation; glycolysis; pyruvate from D-glyceraldehyde 3-phosphate: step 4/5. Functionally, catalyzes the reversible conversion of 2-phosphoglycerate (2-PG) into phosphoenolpyruvate (PEP). It is essential for the degradation of carbohydrates via glycolysis. The protein is Enolase of Alcanivorax borkumensis (strain ATCC 700651 / DSM 11573 / NCIMB 13689 / SK2).